The primary structure comprises 141 residues: MAKELTLSIIKPDAVAKSVIGEIYTRFEKAGLDIVAAKMIQLSREQAESFYDIHRARPFFKDLVDFMISGPVMIQVLKGDNAVAKNREIMGATNPKEAAPGTIRADFADSIDANAVHGSDSLENAAREIAFFFEPHELCNR.

Positions 11, 59, 87, 93, 104, and 114 each coordinate ATP. H117 serves as the catalytic Pros-phosphohistidine intermediate.

It belongs to the NDK family. In terms of assembly, homotetramer. The cofactor is Mg(2+).

It is found in the cytoplasm. It catalyses the reaction a 2'-deoxyribonucleoside 5'-diphosphate + ATP = a 2'-deoxyribonucleoside 5'-triphosphate + ADP. It carries out the reaction a ribonucleoside 5'-diphosphate + ATP = a ribonucleoside 5'-triphosphate + ADP. Major role in the synthesis of nucleoside triphosphates other than ATP. The ATP gamma phosphate is transferred to the NDP beta phosphate via a ping-pong mechanism, using a phosphorylated active-site intermediate. This chain is Nucleoside diphosphate kinase, found in Legionella pneumophila (strain Paris).